The primary structure comprises 276 residues: Dermonecrotic toxin LlSicTox-alphaIV2iii (276 aa).

His-5 is an active-site residue. Mg(2+)-binding residues include Glu-25 and Asp-27. The active-site Nucleophile is the His-41. 2 disulfides stabilise this stretch: Cys-45–Cys-51 and Cys-47–Cys-193. Asp-85 provides a ligand contact to Mg(2+).

Belongs to the arthropod phospholipase D family. Class II subfamily. The cofactor is Mg(2+). As to expression, expressed by the venom gland.

The protein resides in the secreted. The catalysed reaction is an N-(acyl)-sphingosylphosphocholine = an N-(acyl)-sphingosyl-1,3-cyclic phosphate + choline. It carries out the reaction an N-(acyl)-sphingosylphosphoethanolamine = an N-(acyl)-sphingosyl-1,3-cyclic phosphate + ethanolamine. The enzyme catalyses a 1-acyl-sn-glycero-3-phosphocholine = a 1-acyl-sn-glycero-2,3-cyclic phosphate + choline. It catalyses the reaction a 1-acyl-sn-glycero-3-phosphoethanolamine = a 1-acyl-sn-glycero-2,3-cyclic phosphate + ethanolamine. Functionally, dermonecrotic toxins cleave the phosphodiester linkage between the phosphate and headgroup of certain phospholipids (sphingolipid and lysolipid substrates), forming an alcohol (often choline) and a cyclic phosphate. This toxin acts on sphingomyelin (SM). It may also act on ceramide phosphoethanolamine (CPE), lysophosphatidylcholine (LPC) and lysophosphatidylethanolamine (LPE), but not on lysophosphatidylserine (LPS), and lysophosphatidylglycerol (LPG). It acts by transphosphatidylation, releasing exclusively cyclic phosphate products as second products. Induces dermonecrosis, hemolysis, increased vascular permeability, edema, inflammatory response, and platelet aggregation. The chain is Dermonecrotic toxin LlSicTox-alphaIV2iii from Loxosceles laeta (South American recluse spider).